Consider the following 687-residue polypeptide: DNA ligase (687 aa).

NAD(+) contacts are provided by residues 34–38 (DAEYD), 83–84 (SL), and Glu-117. Catalysis depends on Lys-119, which acts as the N6-AMP-lysine intermediate. Residues Arg-140, Glu-182, Lys-298, and Lys-322 each contribute to the NAD(+) site. The Zn(2+) site is built by Cys-416, Cys-419, Cys-434, and Cys-439. The 79-residue stretch at 609–687 (EARGPFAGKT…EEEFVRLLKE (79 aa)) folds into the BRCT domain.

It belongs to the NAD-dependent DNA ligase family. LigA subfamily. Requires Mg(2+) as cofactor. The cofactor is Mn(2+).

It catalyses the reaction NAD(+) + (deoxyribonucleotide)n-3'-hydroxyl + 5'-phospho-(deoxyribonucleotide)m = (deoxyribonucleotide)n+m + AMP + beta-nicotinamide D-nucleotide.. In terms of biological role, DNA ligase that catalyzes the formation of phosphodiester linkages between 5'-phosphoryl and 3'-hydroxyl groups in double-stranded DNA using NAD as a coenzyme and as the energy source for the reaction. It is essential for DNA replication and repair of damaged DNA. This is DNA ligase from Anaeromyxobacter sp. (strain K).